The following is a 124-amino-acid chain: TP53-target gene 3 protein (124 aa).

Positions 1–11 (MRASPCISQPA) are enriched in polar residues. A disordered region spans residues 1–42 (MRASPCISQPAASWHPRPSALRPTAGSGPDTRTPGTVEDGSA).

Strongly expressed in testis. Weakly expressed in heart, placenta and skeletal muscle.

The protein localises to the cytoplasm. It localises to the nucleus. May play a significant role in p53/TP53-mediating signaling pathway. This Homo sapiens (Human) protein is TP53-target gene 3 protein.